Here is a 228-residue protein sequence, read N- to C-terminus: Transcription factor zip-11 (228 aa).

Residues arginine 166–arginine 202 are basic motif. The 59-residue stretch at arginine 166–lysine 224 folds into the bZIP domain. Residues leucine 203–leucine 210 are leucine-zipper.

This sequence belongs to the bZIP family. Interacts with CCAAT/enhancer-binding protein cebp-2.

The protein localises to the nucleus. Transcription factor. Involved in modulating innate immune response pathways, acting to promote resistance against infection by Gram-negative bacterium P.aeruginosa strain PA14. May act as part of a feedback regulatory loop with the pmk-1/p38 MAPK pathway. May also function in concert with CCAAT/enhancer-binding protein cebp-2 to mediate immune responses, independently of the pmk-1/p38 MAPK pathway. The protein is Transcription factor zip-11 of Caenorhabditis elegans.